We begin with the raw amino-acid sequence, 291 residues long: Ribosomal RNA small subunit methyltransferase A (291 aa).

S-adenosyl-L-methionine is bound by residues Asn-33, Val-35, Gly-60, Glu-81, Asp-111, and Asn-129.

It belongs to the class I-like SAM-binding methyltransferase superfamily. rRNA adenine N(6)-methyltransferase family. RsmA subfamily.

The protein localises to the cytoplasm. It carries out the reaction adenosine(1518)/adenosine(1519) in 16S rRNA + 4 S-adenosyl-L-methionine = N(6)-dimethyladenosine(1518)/N(6)-dimethyladenosine(1519) in 16S rRNA + 4 S-adenosyl-L-homocysteine + 4 H(+). Its function is as follows. Specifically dimethylates two adjacent adenosines (A1518 and A1519) in the loop of a conserved hairpin near the 3'-end of 16S rRNA in the 30S particle. May play a critical role in biogenesis of 30S subunits. This chain is Ribosomal RNA small subunit methyltransferase A, found in Streptomyces griseus subsp. griseus (strain JCM 4626 / CBS 651.72 / NBRC 13350 / KCC S-0626 / ISP 5235).